Consider the following 450-residue polypeptide: 6-phospho-beta-glucosidase (450 aa).

NAD(+) is bound at residue 5 to 73; it reads LKVVTIGGGS…VPMKLYKTLD (69 aa). Residues Arg-96 and Asn-150 each coordinate substrate. Mn(2+) contacts are provided by Cys-172 and His-203. The active-site Proton acceptor is Tyr-258.

Homotetramer. The cofactor is NAD(+). Mn(2+) serves as cofactor. Requires Co(2+) as cofactor. Ni(2+) is required as a cofactor.

It carries out the reaction 6-phospho-beta-D-glucosyl-(1-&gt;4)-D-glucose + H2O = D-glucose 6-phosphate + D-glucose. In terms of biological role, hydrolyzes a wide variety of P-beta-glucosides including cellobiose-6P, salicin-6P, arbutin-6P, gentiobiose-6P, methyl-beta-glucoside-6P and p-nitrophenyl-beta-D-glucopyranoside-6P. Is also able to hydrolyze phospho-N,N'-diacetylchitobiose. The protein is 6-phospho-beta-glucosidase (chbF) of Escherichia coli (strain K12).